A 1083-amino-acid chain; its full sequence is Solute carrier family 12 member 7 (1083 aa).

The segment at 1–55 (MPTNFTVVPVEARADGAGDEAAERTEEPESPESVDQTSPTPGDGNPRENSPFINN) is disordered. Residues 1–119 (MPTNFTVVPV…RREVKAPRMG (119 aa)) lie on the Cytoplasmic side of the membrane. Over residues 12–27 (ARADGAGDEAAERTEE) the composition is skewed to basic and acidic residues. Serine 30 and serine 33 each carry phosphoserine. At threonine 37 the chain carries Phosphothreonine. 2 positions are modified to phosphoserine: serine 50 and serine 62. A discontinuously helical membrane pass occupies residues 120–142 (TFIGVYLPCLQNILGVILFLRLT). Positions 131 and 132 each coordinate K(+). Valine 135 serves as a coordination point for chloride. The Extracellular portion of the chain corresponds to 143-149 (WIVGAAG). A helical membrane pass occupies residues 150–172 (VMESFLIVAMCCTCTMLTAISMS). At 173–196 (AIATNGVVPAGGSYYMISRSLGPE) the chain is on the cytoplasmic side. Residues 197–225 (FGGAVGLCFYLGTTFAGAMYILGTIEIFL) traverse the membrane as a helical segment. Residues 226-249 (TYISPSAAIFQAETADGEAAALLN) are Extracellular-facing. The next 2 helical transmembrane spans lie at 250–271 (NMRV…VGVK) and 272–300 (YVNK…KTAF). Topologically, residues 301-419 (APPDIPVCLL…PYVLTDIMTY (119 aa)) are extracellular. Asparagine 312 carries N-linked (GlcNAc...) (high mannose) asparagine glycosylation. N-linked (GlcNAc...) (complex) asparagine glycans are attached at residues asparagine 331 and asparagine 344. Asparagine 360 carries an N-linked (GlcNAc...) (high mannose) asparagine glycan. A helical transmembrane segment spans residues 420-440 (FTMLVGIYFPSVTGIMAGSNR). K(+)-binding residues include proline 429 and threonine 432. Proline 429 provides a ligand contact to chloride. The chloride site is built by glycine 433 and isoleucine 434. Residues 441 to 450 (SGDLKDAQKS) lie on the Cytoplasmic side of the membrane. A helical membrane pass occupies residues 451–473 (IPTGTILAIVTTSFIYLSCIVLF). The Extracellular portion of the chain corresponds to 474–504 (GACIEGVVLRDKFGEALQGNLVIGMLAWPSP). A helical membrane pass occupies residues 505-531 (WVIVIGSFFSTCGAGLQSLTGAPRLLQ). The Cytoplasmic portion of the chain corresponds to 532–554 (AIARDGIIPFLQVFGHGKANGEP). 2 helical membrane passes run 555-573 (TWAL…LIAS) and 574-598 (LDSV…ACAV). Tyrosine 589 provides a ligand contact to chloride. The Cytoplasmic segment spans residues 599 to 612 (QTLLRTPNWRPRFK). Helical transmembrane passes span 613–635 (FYHW…ICSW) and 636–651 (YYAL…IYKY). Residues 652–1083 (IEYRGAEKEW…GGREVITIYS (432 aa)) lie on the Cytoplasmic side of the membrane. The interval 664–680 (GIRGLSLNAARYALLRV) is scissor helix. Threonine 973 and threonine 980 each carry phosphothreonine.

The protein belongs to the SLC12A transporter family. K/Cl co-transporter subfamily. In terms of assembly, homodimer; adopts a domain-swap conformation at the scissor helices connecting the transmembrane domain and C-terminal domain. Heterodimer with K-Cl cotransporter SLC12A5. Glycosylation at Asn-331 and Asn-344 is required for proper trafficking to the cell surface, and augments protein stability. As to expression, detected in proximal tubules in the kidney, in particular in basolateral membranes of intercalated cells in the cortical collecting duct.

Its subcellular location is the cell membrane. It carries out the reaction K(+)(in) + chloride(in) = K(+)(out) + chloride(out). Activated by N-ethylmaleimide (NEM). Inhibited by furosemide, DIDS and bumetanide. The inhibition is much stronger in the presence of 50 mM K(+) in the uptake medium. Inhibited by DIOA. Inhibited by WNK3. In terms of biological role, mediates electroneutral potassium-chloride cotransport when activated by cell swelling. May mediate K(+) uptake into Deiters' cells in the cochlea and contribute to K(+) recycling in the inner ear. Important for the survival of cochlear outer and inner hair cells and the maintenance of the organ of Corti. May be required for basolateral Cl(-) extrusion in the kidney and contribute to renal acidification. This chain is Solute carrier family 12 member 7 (Slc12a7), found in Mus musculus (Mouse).